The sequence spans 414 residues: Translation initiation factor 2 subunit gamma (414 aa).

A tr-type G domain is found at 7-204; the sequence is QPEVNIGLVG…ALQTEIATPD (198 aa). A G1 region spans residues 16–23; sequence GHVDHGKT. Residues Asp-19, Thr-23, Gly-44, and Ser-46 each coordinate Mg(2+). Position 19–24 (19–24) interacts with GTP; that stretch reads DHGKTT. Residues 44 to 48 are G2; that stretch reads GISIR. The segment at 91–94 is G3; sequence DAPG. GTP-binding positions include 147–150 and 182–184; these read NKVD and SAE. Residues 147–150 form a G4 region; the sequence is NKVD. The segment at 182–184 is G5; sequence SAE.

The protein belongs to the TRAFAC class translation factor GTPase superfamily. Classic translation factor GTPase family. EIF2G subfamily. Heterotrimer composed of an alpha, a beta and a gamma chain. Mg(2+) serves as cofactor.

It carries out the reaction GTP + H2O = GDP + phosphate + H(+). In terms of biological role, eIF-2 functions in the early steps of protein synthesis by forming a ternary complex with GTP and initiator tRNA. The sequence is that of Translation initiation factor 2 subunit gamma from Halobacterium salinarum (strain ATCC 29341 / DSM 671 / R1).